The sequence spans 930 residues: Protein translocase subunit SecA (930 aa).

ATP-binding positions include Q87, 105–109 (GEGKT), and D516. The Zn(2+) site is built by C914, C916, C925, and H926.

The protein belongs to the SecA family. Monomer and homodimer. Part of the essential Sec protein translocation apparatus which comprises SecA, SecYEG and auxiliary proteins SecDF-YajC and YidC. The cofactor is Zn(2+).

The protein localises to the cell inner membrane. The protein resides in the cytoplasm. The catalysed reaction is ATP + H2O + cellular proteinSide 1 = ADP + phosphate + cellular proteinSide 2.. Functionally, part of the Sec protein translocase complex. Interacts with the SecYEG preprotein conducting channel. Has a central role in coupling the hydrolysis of ATP to the transfer of proteins into and across the cell membrane, serving both as a receptor for the preprotein-SecB complex and as an ATP-driven molecular motor driving the stepwise translocation of polypeptide chains across the membrane. The sequence is that of Protein translocase subunit SecA from Variovorax paradoxus (strain S110).